We begin with the raw amino-acid sequence, 321 residues long: Ribose-phosphate pyrophosphokinase (321 aa).

ATP-binding positions include 39–41 (DGE) and 98–99 (RQ). Positions 132 and 170 each coordinate Mg(2+). Lys-195 is a catalytic residue. Residues Arg-197, Asp-221, and 225–229 (DTGGT) contribute to the D-ribose 5-phosphate site.

It belongs to the ribose-phosphate pyrophosphokinase family. Class I subfamily. As to quaternary structure, homohexamer. The cofactor is Mg(2+).

The protein localises to the cytoplasm. It catalyses the reaction D-ribose 5-phosphate + ATP = 5-phospho-alpha-D-ribose 1-diphosphate + AMP + H(+). It participates in metabolic intermediate biosynthesis; 5-phospho-alpha-D-ribose 1-diphosphate biosynthesis; 5-phospho-alpha-D-ribose 1-diphosphate from D-ribose 5-phosphate (route I): step 1/1. Functionally, involved in the biosynthesis of the central metabolite phospho-alpha-D-ribosyl-1-pyrophosphate (PRPP) via the transfer of pyrophosphoryl group from ATP to 1-hydroxyl of ribose-5-phosphate (Rib-5-P). The chain is Ribose-phosphate pyrophosphokinase from Mycoplasmopsis pulmonis (strain UAB CTIP) (Mycoplasma pulmonis).